Reading from the N-terminus, the 300-residue chain is Actin-related protein 2/3 complex subunit 2-B (300 aa).

This sequence belongs to the ARPC2 family. In terms of assembly, component of the Arp2/3 complex composed of actr2/arp2, actr3/arp3, arpc1 (arpc1a or arpc1b), arpc2, arpc3, arpc4 and arpc5.

Its subcellular location is the cytoplasm. The protein localises to the cytoskeleton. The protein resides in the cell projection. It localises to the nucleus. Functionally, actin-binding component of the Arp2/3 complex, a multiprotein complex that mediates actin polymerization upon stimulation by nucleation-promoting factor (NPF). The Arp2/3 complex mediates the formation of branched actin networks in the cytoplasm, providing the force for cell motility. In addition to its role in the cytoplasmic cytoskeleton, the Arp2/3 complex also promotes actin polymerization in the nucleus, thereby regulating gene transcription and repair of damaged DNA. The Arp2/3 complex promotes homologous recombination (HR) repair in response to DNA damage by promoting nuclear actin polymerization, leading to drive motility of double-strand breaks (DSBs). The sequence is that of Actin-related protein 2/3 complex subunit 2-B (arpc2-b) from Xenopus laevis (African clawed frog).